A 277-amino-acid chain; its full sequence is Large ribosomal subunit protein uL2 (277 aa).

2 disordered regions span residues 32-58 (KSLT…RGGG) and 225-277 (VAMN…RRNK). Basic residues predominate over residues 258 to 277 (YKTRKKKRYSDKFIIKRRNK).

This sequence belongs to the universal ribosomal protein uL2 family. As to quaternary structure, part of the 50S ribosomal subunit. Forms a bridge to the 30S subunit in the 70S ribosome.

One of the primary rRNA binding proteins. Required for association of the 30S and 50S subunits to form the 70S ribosome, for tRNA binding and peptide bond formation. It has been suggested to have peptidyltransferase activity; this is somewhat controversial. Makes several contacts with the 16S rRNA in the 70S ribosome. This chain is Large ribosomal subunit protein uL2, found in Borreliella burgdorferi (strain ATCC 35210 / DSM 4680 / CIP 102532 / B31) (Borrelia burgdorferi).